Consider the following 188-residue polypeptide: Elongation factor P (188 aa).

At Lys34 the chain carries N6-(3,6-diaminohexanoyl)-5-hydroxylysine.

Belongs to the elongation factor P family. May be beta-lysylated on the epsilon-amino group of Lys-34 by the combined action of EpmA and EpmB, and then hydroxylated on the C5 position of the same residue by EpmC (if this protein is present). Lysylation is critical for the stimulatory effect of EF-P on peptide-bond formation. The lysylation moiety may extend toward the peptidyltransferase center and stabilize the terminal 3-CCA end of the tRNA. Hydroxylation of the C5 position on Lys-34 may allow additional potential stabilizing hydrogen-bond interactions with the P-tRNA.

The protein localises to the cytoplasm. Its pathway is protein biosynthesis; polypeptide chain elongation. In terms of biological role, involved in peptide bond synthesis. Alleviates ribosome stalling that occurs when 3 or more consecutive Pro residues or the sequence PPG is present in a protein, possibly by augmenting the peptidyl transferase activity of the ribosome. Modification of Lys-34 is required for alleviation. The protein is Elongation factor P of Citrobacter koseri (strain ATCC BAA-895 / CDC 4225-83 / SGSC4696).